The following is a 488-amino-acid chain: GTPase Der (488 aa).

2 EngA-type G domains span residues 3–166 (PVVA…AEAM) and 199–372 (IKLA…DSAT). GTP contacts are provided by residues 9–16 (GRPNVGKS), 56–60 (DTGGI), 118–121 (NKID), 205–212 (GKPNVGKS), 252–256 (DTAGV), and 317–320 (NKWD). The 85-residue stretch at 373-457 (RRVSTSMLTR…PIQLRFQEGD (85 aa)) folds into the KH-like domain.

The protein belongs to the TRAFAC class TrmE-Era-EngA-EngB-Septin-like GTPase superfamily. EngA (Der) GTPase family. As to quaternary structure, associates with the 50S ribosomal subunit.

Its function is as follows. GTPase that plays an essential role in the late steps of ribosome biogenesis. This chain is GTPase Der, found in Shewanella sp. (strain MR-7).